The primary structure comprises 89 residues: Elongation factor 1-beta (89 aa).

The protein belongs to the EF-1-beta/EF-1-delta family.

In terms of biological role, promotes the exchange of GDP for GTP in EF-1-alpha/GDP, thus allowing the regeneration of EF-1-alpha/GTP that could then be used to form the ternary complex EF-1-alpha/GTP/AAtRNA. The protein is Elongation factor 1-beta of Methanosarcina mazei (strain ATCC BAA-159 / DSM 3647 / Goe1 / Go1 / JCM 11833 / OCM 88) (Methanosarcina frisia).